Here is a 105-residue protein sequence, read N- to C-terminus: Nucleoid-associated protein Dred_0043 (105 aa).

The protein belongs to the YbaB/EbfC family. As to quaternary structure, homodimer.

It localises to the cytoplasm. Its subcellular location is the nucleoid. Its function is as follows. Binds to DNA and alters its conformation. May be involved in regulation of gene expression, nucleoid organization and DNA protection. The protein is Nucleoid-associated protein Dred_0043 of Desulforamulus reducens (strain ATCC BAA-1160 / DSM 100696 / MI-1) (Desulfotomaculum reducens).